The sequence spans 132 residues: Small ribosomal subunit protein uS11 (132 aa).

The segment covering 1–16 has biased composition (basic residues); that stretch reads MAAGMKGKRSRRRKER. Residues 1-20 form a disordered region; the sequence is MAAGMKGKRSRRRKERKNVE.

Belongs to the universal ribosomal protein uS11 family. As to quaternary structure, part of the 30S ribosomal subunit. Interacts with proteins S7 and S18. Binds to IF-3.

Located on the platform of the 30S subunit, it bridges several disparate RNA helices of the 16S rRNA. Forms part of the Shine-Dalgarno cleft in the 70S ribosome. The polypeptide is Small ribosomal subunit protein uS11 (Clostridium botulinum (strain Loch Maree / Type A3)).